Here is a 93-residue protein sequence, read N- to C-terminus: uncharacterized protein (93 aa).

This is an uncharacterized protein from Treponema pallidum (strain Nichols).